A 276-amino-acid chain; its full sequence is Putative pyruvate, phosphate dikinase regulatory protein (276 aa).

Position 152–159 (152–159 (GISRTSKT)) interacts with ADP.

The protein belongs to the pyruvate, phosphate/water dikinase regulatory protein family. PDRP subfamily.

It carries out the reaction N(tele)-phospho-L-histidyl/L-threonyl-[pyruvate, phosphate dikinase] + ADP = N(tele)-phospho-L-histidyl/O-phospho-L-threonyl-[pyruvate, phosphate dikinase] + AMP + H(+). It catalyses the reaction N(tele)-phospho-L-histidyl/O-phospho-L-threonyl-[pyruvate, phosphate dikinase] + phosphate + H(+) = N(tele)-phospho-L-histidyl/L-threonyl-[pyruvate, phosphate dikinase] + diphosphate. In terms of biological role, bifunctional serine/threonine kinase and phosphorylase involved in the regulation of the pyruvate, phosphate dikinase (PPDK) by catalyzing its phosphorylation/dephosphorylation. The sequence is that of Putative pyruvate, phosphate dikinase regulatory protein from Staphylococcus carnosus (strain TM300).